The primary structure comprises 409 residues: S-adenosylmethionine synthase (409 aa).

Residue H15 coordinates ATP. Residue D17 coordinates Mg(2+). E43 serves as a coordination point for K(+). E56 and Q100 together coordinate L-methionine. Residues 100–110 (QSSDIAQGVNE) form a flexible loop region. Residues 171–173 (DGK), 248–249 (KF), D257, 263–264 (RK), A280, and K284 contribute to the ATP site. D257 serves as a coordination point for L-methionine. Position 288 (K288) interacts with L-methionine.

Belongs to the AdoMet synthase family. In terms of assembly, homotetramer; dimer of dimers. Mg(2+) serves as cofactor. K(+) is required as a cofactor.

Its subcellular location is the cytoplasm. The catalysed reaction is L-methionine + ATP + H2O = S-adenosyl-L-methionine + phosphate + diphosphate. It participates in amino-acid biosynthesis; S-adenosyl-L-methionine biosynthesis; S-adenosyl-L-methionine from L-methionine: step 1/1. Functionally, catalyzes the formation of S-adenosylmethionine (AdoMet) from methionine and ATP. The overall synthetic reaction is composed of two sequential steps, AdoMet formation and the subsequent tripolyphosphate hydrolysis which occurs prior to release of AdoMet from the enzyme. The protein is S-adenosylmethionine synthase of Prochlorococcus marinus (strain NATL1A).